A 186-amino-acid polypeptide reads, in one-letter code: Ribosome-recycling factor (186 aa).

This sequence belongs to the RRF family.

The protein resides in the cytoplasm. Its function is as follows. Responsible for the release of ribosomes from messenger RNA at the termination of protein biosynthesis. May increase the efficiency of translation by recycling ribosomes from one round of translation to another. The chain is Ribosome-recycling factor from Cupriavidus pinatubonensis (strain JMP 134 / LMG 1197) (Cupriavidus necator (strain JMP 134)).